We begin with the raw amino-acid sequence, 326 residues long: N-acetyl-gamma-glutamyl-phosphate reductase (326 aa).

The active site involves Cys-155.

Belongs to the NAGSA dehydrogenase family. Type 1 subfamily.

Its subcellular location is the cytoplasm. It catalyses the reaction N-acetyl-L-glutamate 5-semialdehyde + phosphate + NADP(+) = N-acetyl-L-glutamyl 5-phosphate + NADPH + H(+). The protein operates within amino-acid biosynthesis; L-arginine biosynthesis; N(2)-acetyl-L-ornithine from L-glutamate: step 3/4. Catalyzes the NADPH-dependent reduction of N-acetyl-5-glutamyl phosphate to yield N-acetyl-L-glutamate 5-semialdehyde. The polypeptide is N-acetyl-gamma-glutamyl-phosphate reductase (Shewanella baltica (strain OS185)).